The following is a 1017-amino-acid chain: Probable beta-galactosidase B (1017 aa).

Residues M1–A20 form the signal peptide. N23 is a glycosylation site (N-linked (GlcNAc...) asparagine). Y90 contacts substrate. An N-linked (GlcNAc...) asparagine glycan is attached at N100. 3 residues coordinate substrate: N135, A136, and E137. N158 is a glycosylation site (N-linked (GlcNAc...) asparagine). N195 is a substrate binding site. The active-site Proton donor is the E196. N211 is a glycosylation site (N-linked (GlcNAc...) asparagine). Y265 contacts substrate. C271 and C324 form a disulfide bridge. E308 acts as the Nucleophile in catalysis. A substrate-binding site is contributed by Y373. N-linked (GlcNAc...) asparagine glycosylation is found at N411, N417, N456, N628, N681, N737, N770, N777, N785, N828, and N829.

The protein belongs to the glycosyl hydrolase 35 family.

It localises to the secreted. The enzyme catalyses Hydrolysis of terminal non-reducing beta-D-galactose residues in beta-D-galactosides.. In terms of biological role, cleaves beta-linked terminal galactosyl residues from gangliosides, glycoproteins, and glycosaminoglycans. In Aspergillus niger (strain ATCC MYA-4892 / CBS 513.88 / FGSC A1513), this protein is Probable beta-galactosidase B (lacB).